We begin with the raw amino-acid sequence, 217 residues long: Photosynthetic NDH subunit of lumenal location 4, chloroplastic (217 aa).

Residues 1–34 constitute a chloroplast transit peptide; that stretch reads MAISTLTLTQSLYTRSFRPTIFFSSSSSSSFSCL. Disulfide bonds link Cys-87–Cys-99 and Cys-188–Cys-193. A PPIase FKBP-type domain is found at 112 to 211; the sequence is GVLVNIHYTA…LYDINFVEIY (100 aa).

It belongs to the FKBP-type PPIase family. In terms of assembly, part of the chloroplast NDH complex, composed of a mixture of chloroplast and nucleus encoded subunits. Component of the NDH lumenal subcomplex, at least composed of PnsL1, PnsL2, PnsL3, PnsL4 and PnsL5.

Its subcellular location is the plastid. It is found in the chloroplast thylakoid lumen. The catalysed reaction is [protein]-peptidylproline (omega=180) = [protein]-peptidylproline (omega=0). Functionally, NDH shuttles electrons from NAD(P)H:plastoquinone, via FMN and iron-sulfur (Fe-S) centers, to quinones in the photosynthetic chain and possibly in a chloroplast respiratory chain. The immediate electron acceptor for the enzyme in this species is believed to be plastoquinone. Couples the redox reaction to proton translocation, and thus conserves the redox energy in a proton gradient. PPIases accelerate the folding of proteins. It catalyzes the cis-trans isomerization of proline imidic peptide bonds in oligopeptides. Seems to be essential for stabilizing the NDH subcomplex A. The protein is Photosynthetic NDH subunit of lumenal location 4, chloroplastic of Arabidopsis thaliana (Mouse-ear cress).